The chain runs to 104 residues: UPF0213 protein VIBHAR_05350 (104 aa).

The GIY-YIG domain maps to 7–82 (QRWSVYLIRN…KQLTKTKKEL (76 aa)).

The protein belongs to the UPF0213 family.

In Vibrio campbellii (strain ATCC BAA-1116), this protein is UPF0213 protein VIBHAR_05350.